Consider the following 119-residue polypeptide: uncharacterized protein (119 aa).

Residues 30–50 traverse the membrane as a helical segment; it reads LMTLPCVLFLSSFGQAVIVVL.

It is found in the membrane. This is an uncharacterized protein from Saccharomyces cerevisiae (strain ATCC 204508 / S288c) (Baker's yeast).